A 297-amino-acid polypeptide reads, in one-letter code: AKT-interacting protein (297 aa).

A compositionally biased stretch (polar residues) spans 1–13 (MNLNPFWSMSTNT). Positions 1-45 (MNLNPFWSMSTNTGRKRSDGEEQSGEQQQQQRASPARPSFGKKQL) are disordered. Residues 25–39 (GEQQQQQRASPARPS) show a composition bias toward low complexity. In terms of domain architecture, UBC core spans 79–227 (YLEYSLLAEF…VVDSVKLCNS (149 aa)). Positions 262–297 (KRRPEDHHKGLQVSGLSWVKPGSTQPFSKDDNPPQN) are disordered.

This sequence belongs to the ubiquitin-conjugating enzyme family. FTS subfamily.

It is found in the cytoplasm. It localises to the cell membrane. In terms of biological role, may function to promote vesicle trafficking and/or fusion. May also regulate apoptosis. This Salmo salar (Atlantic salmon) protein is AKT-interacting protein (aktip).